The following is a 133-amino-acid chain: Small ribosomal subunit protein uS8 (133 aa).

The protein belongs to the universal ribosomal protein uS8 family. Part of the 30S ribosomal subunit. Contacts proteins S5 and S12.

In terms of biological role, one of the primary rRNA binding proteins, it binds directly to 16S rRNA central domain where it helps coordinate assembly of the platform of the 30S subunit. This is Small ribosomal subunit protein uS8 from Prochlorococcus marinus (strain MIT 9312).